The chain runs to 131 residues: MKLGAFYKGGDLVKPSGGKKGRVRKTKKKALGGGPPQIPKLGEEDIRYVERVRGGNHKVRLRQARYANVYIPKERRHVKAKILSIVSSPSNPDYARRNYIVKGAIIQTEVGKAVVTSRPGQDGVINAVLIE.

The interval 15–36 (PSGGKKGRVRKTKKKALGGGPP) is disordered. Residues 17-30 (GGKKGRVRKTKKKA) are compositionally biased toward basic residues.

Belongs to the eukaryotic ribosomal protein eS8 family. In terms of assembly, part of the 30S ribosomal subunit.

This chain is Small ribosomal subunit protein eS8, found in Pyrobaculum calidifontis (strain DSM 21063 / JCM 11548 / VA1).